The following is a 193-amino-acid chain: Translocation protein SEC72 (193 aa).

Component of the heterotetrameric Sec62/63complex composed of SEC62, SEC63, SEC71 and SEC72. The Sec62/63 complex associates with the Sec61 complex to form the Sec complex. May interact with protein YLR301W. Part of a complex consisting of KAR2, SEC63, SEC66 and SEC72.

The protein localises to the cytoplasm. In terms of biological role, acts as a non-essential component of the Sec62/63 complex which is involved in SRP-independent post-translational translocation across the endoplasmic reticulum (ER) and functions together with the Sec61 complex and KAR2 in a channel-forming translocon complex. A cycle of assembly and disassembly of Sec62/63 complex from SEC61 may govern the activity of the translocon. SEC72 may be involved in signal peptide recognition for a defined subset of leader peptides, or may increase the efficiency of unusual or 'difficult' secretory precursors to the translocation pore, it may be that this protein binds charged leader peptides to the membrane until they engage the translocation apparatus. The chain is Translocation protein SEC72 (SEC72) from Saccharomyces cerevisiae (strain ATCC 204508 / S288c) (Baker's yeast).